A 248-amino-acid polypeptide reads, in one-letter code: Pyridoxine 5'-phosphate synthase (248 aa).

3-amino-2-oxopropyl phosphate is bound at residue N10. 12–13 (DH) serves as a coordination point for 1-deoxy-D-xylulose 5-phosphate. R21 is a 3-amino-2-oxopropyl phosphate binding site. H46 (proton acceptor) is an active-site residue. 1-deoxy-D-xylulose 5-phosphate is bound by residues R48 and H53. The Proton acceptor role is filled by E73. T103 serves as a coordination point for 1-deoxy-D-xylulose 5-phosphate. H194 functions as the Proton donor in the catalytic mechanism. Residues G195 and 216-217 (GH) each bind 3-amino-2-oxopropyl phosphate.

This sequence belongs to the PNP synthase family. In terms of assembly, homooctamer; tetramer of dimers.

It is found in the cytoplasm. It carries out the reaction 3-amino-2-oxopropyl phosphate + 1-deoxy-D-xylulose 5-phosphate = pyridoxine 5'-phosphate + phosphate + 2 H2O + H(+). The protein operates within cofactor biosynthesis; pyridoxine 5'-phosphate biosynthesis; pyridoxine 5'-phosphate from D-erythrose 4-phosphate: step 5/5. Catalyzes the complicated ring closure reaction between the two acyclic compounds 1-deoxy-D-xylulose-5-phosphate (DXP) and 3-amino-2-oxopropyl phosphate (1-amino-acetone-3-phosphate or AAP) to form pyridoxine 5'-phosphate (PNP) and inorganic phosphate. The chain is Pyridoxine 5'-phosphate synthase from Legionella pneumophila (strain Corby).